We begin with the raw amino-acid sequence, 68 residues long: MSAEERLIELEIRVAEQEKTIDELSFVLTEQWKTVDQLSKKLNALTNRFLELEEQAAPDVPVTKPPHW.

This sequence belongs to the SlyX family.

In Brucella melitensis biotype 1 (strain ATCC 23456 / CCUG 17765 / NCTC 10094 / 16M), this protein is Protein SlyX homolog.